The following is a 65-amino-acid chain: Large ribosomal subunit protein bL35 (65 aa).

This sequence belongs to the bacterial ribosomal protein bL35 family.

This Baumannia cicadellinicola subsp. Homalodisca coagulata protein is Large ribosomal subunit protein bL35.